Here is a 193-residue protein sequence, read N- to C-terminus: Leucyl/phenylalanyl-tRNA--protein transferase (193 aa).

The protein belongs to the L/F-transferase family.

The protein localises to the cytoplasm. The catalysed reaction is N-terminal L-lysyl-[protein] + L-leucyl-tRNA(Leu) = N-terminal L-leucyl-L-lysyl-[protein] + tRNA(Leu) + H(+). The enzyme catalyses N-terminal L-arginyl-[protein] + L-leucyl-tRNA(Leu) = N-terminal L-leucyl-L-arginyl-[protein] + tRNA(Leu) + H(+). It catalyses the reaction L-phenylalanyl-tRNA(Phe) + an N-terminal L-alpha-aminoacyl-[protein] = an N-terminal L-phenylalanyl-L-alpha-aminoacyl-[protein] + tRNA(Phe). Functionally, functions in the N-end rule pathway of protein degradation where it conjugates Leu, Phe and, less efficiently, Met from aminoacyl-tRNAs to the N-termini of proteins containing an N-terminal arginine or lysine. The protein is Leucyl/phenylalanyl-tRNA--protein transferase of Akkermansia muciniphila (strain ATCC BAA-835 / DSM 22959 / JCM 33894 / BCRC 81048 / CCUG 64013 / CIP 107961 / Muc).